The following is a 433-amino-acid chain: MAQEIELKFIVNHSAVEALRDHLNTLGGEHHDPVQLLNIYYETPDNWLRGHDMGLRIRGENGRYEMTMKVAGRVTGGLHQRPEYNVALSEPTLDLAQLPTEVWPNGELPADLASRVQPLFSTDFYREKWLVAVDGSQIEIALDQGEVKAGEFAEPICELELELLSGDTRAVLKLANQLVSQTGLRQGSLSKAARGYHLAQGNPAREIKPTTILHVAAKADVEQGLEAALELALAQWQYHEELWVRGNDAAKEQVLAAISLVRHTLMLFGGIVPRKASTHLRDLLTQCEATIASAVSAVTAVYSTETAMAKLALTEWLVSKAWQPFLDAKAQGKISDSFKRFADIHLSRHAAELKSVFCQPLGDRYRDQLPRLTRDIDSILLLAGYYDPVVAQAWLENWQGLHHAIATGQRIEIEHFRNEANNQEPFWLHSGKR.

Positions 2–202 (AQEIELKFIV…ARGYHLAQGN (201 aa)) constitute a CYTH domain. In terms of domain architecture, CHAD spans 218-433 (KADVEQGLEA…EPFWLHSGKR (216 aa)).

It catalyses the reaction triphosphate + H2O = phosphate + diphosphate. Inhibited by calcium ion and activated by magnesium ion. In terms of biological role, involved in the hydrolysis of the beta-gamma-phosphoanhydride linkage of triphosphate-containing substrates (inorganic or nucleoside-linked). Catalyzes the hydrolysis of inorganic triphosphate (PPPi), which could be cytotoxic because of its high affinity for calcium ion, thereby interfering with calcium signaling. It also hydrolyzes slowly thiamine triphosphate (ThTP). YgiF is a specific PPPase, but it contributes only marginally to the total PPPase activity in E.coli, where the main enzyme responsible for hydrolysis of PPPi is inorganic pyrophosphatase (PPase). In Escherichia coli (strain K12), this protein is Inorganic triphosphatase (ygiF).